The primary structure comprises 434 residues: Vi polysaccharide export inner-membrane protein VexD (434 aa).

The segment covering 1–50 (MENSERIKKWKEERAKVAQESRASRLQQKEDERALRQTEKSADAKSHHNP) has biased composition (basic and acidic residues). Positions 1–58 (MENSERIKKWKEERAKVAQESRASRLQQKEDERALRQTEKSADAKSHHNPDAGWSATD) are disordered. The next 2 helical transmembrane spans lie at 84 to 104 (LFLY…ILTS) and 409 to 429 (WLLF…LITI).

Belongs to the BexC/CtrB/KpsE family.

The protein resides in the cell inner membrane. Functionally, may form an ATP-driven capsule polysaccharide export apparatus, in association with the VexA, VexB and VexC proteins. This chain is Vi polysaccharide export inner-membrane protein VexD (vexD), found in Salmonella typhi.